The chain runs to 99 residues: Monothiol glutaredoxin-S11 (99 aa).

In terms of domain architecture, Glutaredoxin spans 1–99; that stretch reads MDKVMRMSSE…LVPLVKPYLC (99 aa). Residue Cys-21 coordinates [2Fe-2S] cluster.

Belongs to the glutaredoxin family. CC-type subfamily.

The protein resides in the cytoplasm. Its function is as follows. May only reduce GSH-thiol disulfides, but not protein disulfides. This is Monothiol glutaredoxin-S11 (GRXS11) from Arabidopsis thaliana (Mouse-ear cress).